The chain runs to 305 residues: Dermonecrotic toxin LrSicTox-alphaIA1ii (305 aa).

The N-terminal stretch at 1-18 is a signal peptide; it reads MLLYVTLILGCWSAFSES. Positions 19 to 26 are excised as a propeptide; the sequence is AETDVAER. The active site involves His37. Residues Glu57 and Asp59 each contribute to the Mg(2+) site. The active-site Nucleophile is the His73. 2 disulfides stabilise this stretch: Cys77–Cys83 and Cys79–Cys222. Position 117 (Asp117) interacts with Mg(2+). N-linked (GlcNAc...) asparagine glycosylation is present at Asn282.

This sequence belongs to the arthropod phospholipase D family. Class II subfamily. Class IIa sub-subfamily. Mg(2+) is required as a cofactor. As to expression, expressed by the venom gland.

The protein resides in the secreted. It catalyses the reaction an N-(acyl)-sphingosylphosphocholine = an N-(acyl)-sphingosyl-1,3-cyclic phosphate + choline. It carries out the reaction an N-(acyl)-sphingosylphosphoethanolamine = an N-(acyl)-sphingosyl-1,3-cyclic phosphate + ethanolamine. The enzyme catalyses a 1-acyl-sn-glycero-3-phosphocholine = a 1-acyl-sn-glycero-2,3-cyclic phosphate + choline. The catalysed reaction is a 1-acyl-sn-glycero-3-phosphoethanolamine = a 1-acyl-sn-glycero-2,3-cyclic phosphate + ethanolamine. With respect to regulation, inhibited with low affinity by edelfosine. In terms of biological role, dermonecrotic toxins cleave the phosphodiester linkage between the phosphate and headgroup of certain phospholipids (sphingolipid and lysolipid substrates), forming an alcohol (often choline) and a cyclic phosphate. This toxin acts on sphingomyelin (SM). It also acts on a broad range of lysophospholipids, like lysophosphatidylinositol (LPI), lysophosphatidylglycerol (LPG), lysophosphatidylethanolamine (LPE), lysobisphosphatidic acid (LBPA), lysophosphatidylserine (LPS) and lysophosphatidylcholines (LPC) of varying chain lengths. The substrate preference is LPI &gt; LPG &gt; LPS &gt; LPC &gt;&gt; LPE, LBPA. Furthermore, the enzyme also act on cyclic phosphatidic acid and lyso-platelet activating factor (LPAF, an alkyl-LPC). The enzyme does not act on sphingosylphosphorylcholine (SPC, also known as lyso-sphingomyelin) and PAF. The toxin may also act on ceramide phosphoethanolamine (CPE). It acts by transphosphatidylation, releasing exclusively cyclic phosphate products as second products. It does not exhibit detectable PLA1/2 activity. It induces dose-dependent hemolysis and dermonecrosis. Also induces increased vascular permeability, edema, inflammatory response, and platelet aggregation. The protein is Dermonecrotic toxin LrSicTox-alphaIA1ii of Loxosceles reclusa (Brown recluse spider).